Reading from the N-terminus, the 490-residue chain is Probable cytochrome P450 518B1 (490 aa).

The chain crosses the membrane as a helical span at residues 2 to 22 (LTNIIILIILYLFYDFCYKNF). Cys-437 lines the heme pocket.

This sequence belongs to the cytochrome P450 family. Heme serves as cofactor.

It localises to the membrane. The protein is Probable cytochrome P450 518B1 (cyp518B1) of Dictyostelium discoideum (Social amoeba).